The following is a 125-amino-acid chain: Basic leucine zipper transcriptional factor ATF-like (125 aa).

Over residues 1–14 the composition is skewed to low complexity; sequence MPHSSDSSDSSFSR. The segment at 1 to 59 is disordered; sequence MPHSSDSSDSSFSRSPPPGKQDSSDDVRKVQRREKNRIAAQKSRQRQTQKADTLHLESE. The 64-residue stretch at 26-89 folds into the bZIP domain; it reads DVRKVQRREK…KYFTSVLSSH (64 aa). A basic motif region spans residues 28-50; that stretch reads RKVQRREKNRIAAQKSRQRQTQK. A Phosphoserine modification is found at serine 43. A Phosphothreonine modification is found at threonine 48. The segment at 54 to 75 is leucine-zipper; the sequence is LHLESEDLEKQNAALRKEIKQL.

The protein belongs to the bZIP family. As to quaternary structure, heterodimer; mainly heterodimerizes with JUNB. The BATF-JUNB heterodimer interacts with IRF4 and IRF8. Interacts (via bZIP domain) with IRF4 and IRF8; the interaction is direct. Also forms heterodimers with JUN and JUND. Interacts with IFI35. Post-translationally, phosphorylated on serine and threonine residues and at least one tyrosine residue. Phosphorylation at Ser-43 inhibit DNA binding activity and transforms it as a negative regulator of AP-1 mediated transcription. As to expression, detected in postnatal and adult lymphoid tissues such as thymus, spleen and lymph nodes. In thymus most concentrated expression is found in the immediate cortical layer. Differentially expressed during T-cell development in thymus. Highly expressed in Th17, Th1 and Th2 cells and in activated B-cells.

It is found in the nucleus. It localises to the cytoplasm. Its function is as follows. AP-1 family transcription factor that controls the differentiation of lineage-specific cells in the immune system: specifically mediates the differentiation of T-helper 17 cells (Th17), follicular T-helper cells (TfH), CD8(+) dendritic cells and class-switch recombination (CSR) in B-cells. Acts via the formation of a heterodimer with JUNB that recognizes and binds DNA sequence 5'-TGA[CG]TCA-3'. The BATF-JUNB heterodimer also forms a complex with IRF4 (or IRF8) in immune cells, leading to recognition of AICE sequence (5'-TGAnTCA/GAAA-3'), an immune-specific regulatory element, followed by cooperative binding of BATF and IRF4 (or IRF8) and activation of genes. Controls differentiation of T-helper cells producing interleukin-17 (Th17 cells) by binding to Th17-associated gene promoters: regulates expression of the transcription factor RORC itself and RORC target genes such as IL17 (IL17A or IL17B). Also involved in differentiation of follicular T-helper cells (TfH) by directing expression of BCL6 and MAF. In B-cells, involved in class-switch recombination (CSR) by controlling the expression of both AICDA and of germline transcripts of the intervening heavy-chain region and constant heavy-chain region (I(H)-C(H)). Following infection, can participate in CD8(+) dendritic cell differentiation via interaction with IRF4 and IRF8 to mediate cooperative gene activation. Regulates effector CD8(+) T-cell differentiation by regulating expression of SIRT1. Following DNA damage, part of a differentiation checkpoint that limits self-renewal of hematopoietic stem cells (HSCs): up-regulated by STAT3, leading to differentiation of HSCs, thereby restricting self-renewal of HSCs. This chain is Basic leucine zipper transcriptional factor ATF-like (Batf), found in Mus musculus (Mouse).